The chain runs to 210 residues: Thymidylate kinase (210 aa).

11–18 (GLEGAGKS) contacts ATP.

It belongs to the thymidylate kinase family.

The catalysed reaction is dTMP + ATP = dTDP + ADP. Phosphorylation of dTMP to form dTDP in both de novo and salvage pathways of dTTP synthesis. In Vibrio parahaemolyticus serotype O3:K6 (strain RIMD 2210633), this protein is Thymidylate kinase.